Consider the following 443-residue polypeptide: Inactive polypeptide N-acetylgalactosaminyltransferase-like protein 5 (443 aa).

Topologically, residues 1-4 are cytoplasmic; the sequence is MRNA. Residues 5-27 form a helical; Signal-anchor for type II membrane protein membrane-spanning segment; that stretch reads IIRCLFYGSLTFGIWTALLFIYL. Residues 28–443 are Lumenal-facing; the sequence is HHNHVSNWQK…PELEASVNRS (416 aa). Asn87 is a glycosylation site (N-linked (GlcNAc...) asparagine). Cystine bridges form between Cys124–Cys355 and Cys346–Cys422. The interval 133-243 is catalytic subdomain A; the sequence is LPTASIVICF…RVWLEPLLHA (111 aa). Residues Asp174 and Arg204 each coordinate substrate. Asp227 is a Mn(2+) binding site. Residue Ser228 coordinates substrate. His229 contributes to the Mn(2+) binding site. Positions 301–363 are catalytic subdomain B; sequence PIRSPAMSGG…PCSRVGHISK (63 aa). Trp332 contacts substrate. Mn(2+) is bound at residue His360.

This sequence belongs to the glycosyltransferase 2 family. GalNAc-T subfamily. Requires Mn(2+) as cofactor. In terms of tissue distribution, expressed in testis.

It localises to the late endosome membrane. Probable inactive glycosyltransferase required during spermatid development. May participate in protein loading into the acrosomes and accumulation of ubiquitin-proteasome systems around the head-tail coupling apparatus region. The chain is Inactive polypeptide N-acetylgalactosaminyltransferase-like protein 5 (GALNTL5) from Macaca fascicularis (Crab-eating macaque).